A 91-amino-acid chain; its full sequence is DNA-directed RNA polymerase subunit omega (91 aa).

Belongs to the RNA polymerase subunit omega family. The RNAP catalytic core consists of 2 alpha, 1 beta, 1 beta' and 1 omega subunit. When a sigma factor is associated with the core the holoenzyme is formed, which can initiate transcription.

It carries out the reaction RNA(n) + a ribonucleoside 5'-triphosphate = RNA(n+1) + diphosphate. Its function is as follows. Promotes RNA polymerase assembly. Latches the N- and C-terminal regions of the beta' subunit thereby facilitating its interaction with the beta and alpha subunits. The polypeptide is DNA-directed RNA polymerase subunit omega (Nocardia farcinica (strain IFM 10152)).